Here is a 424-residue protein sequence, read N- to C-terminus: Probable serine/threonine-protein kinase PBL15 (424 aa).

The Protein kinase domain occupies 99-380 (FSGNYLLGEG…AVVEALESLI (282 aa)). ATP is bound by residues 105–113 (LGEGGFGKV) and Lys-134. Phosphotyrosine is present on Tyr-179. Catalysis depends on Asp-229, which acts as the Proton acceptor. Position 233 is a phosphoserine (Ser-233). Phosphothreonine is present on residues Thr-264 and Thr-269. Position 277 is a phosphotyrosine (Tyr-277). The tract at residues 390–424 (GHWPLSPKSQGGKVSPKVRGDHRSGRKSAPGSLRS) is disordered.

Belongs to the protein kinase superfamily. Ser/Thr protein kinase family. As to quaternary structure, interacts with the Xanthomonas campestris effector XopAC/AvrAC.

The protein resides in the cell membrane. The enzyme catalyses L-seryl-[protein] + ATP = O-phospho-L-seryl-[protein] + ADP + H(+). It carries out the reaction L-threonyl-[protein] + ATP = O-phospho-L-threonyl-[protein] + ADP + H(+). In terms of biological role, may be involved in plant defense signaling. In Arabidopsis thaliana (Mouse-ear cress), this protein is Probable serine/threonine-protein kinase PBL15.